Consider the following 70-residue polypeptide: uncharacterized protein (70 aa).

Transmembrane regions (helical) follow at residues 19–39 and 40–60; these read VIAL…VVGL and LFKL…VRKF.

The protein resides in the cell membrane. This is an uncharacterized protein from Streptomyces coelicolor (strain ATCC BAA-471 / A3(2) / M145).